A 663-amino-acid chain; its full sequence is Polyunsaturated fatty acid lipoxygenase ALOX15 (663 aa).

The PLAT domain occupies 2 to 115 (GVYRIRVSTG…ILSLPEGTGC (114 aa)). One can recognise a Lipoxygenase domain in the interval 116–663 (TVVEDSQGLF…PSMVENSVAI (548 aa)). A Phosphoserine modification is found at serine 149. Residues histidine 361, histidine 366, histidine 541, histidine 545, and isoleucine 663 each coordinate Fe cation.

It belongs to the lipoxygenase family. Interacts with PEBP1; in response to IL13/interleukin-13, prevents the interaction of PEBP1 with RAF1 to activate the ERK signaling cascade. Fe cation is required as a cofactor. In terms of tissue distribution, detected in leukocytes, lung and aorta.

The protein localises to the cytoplasm. It is found in the cytosol. It localises to the cell membrane. The protein resides in the lipid droplet. The enzyme catalyses (5Z,8Z,11Z,14Z)-eicosatetraenoate + O2 = (12S)-hydroperoxy-(5Z,8Z,10E,14Z)-eicosatetraenoate. The catalysed reaction is (5Z,8Z,11Z,14Z)-eicosatetraenoate + O2 = (15S)-hydroperoxy-(5Z,8Z,11Z,13E)-eicosatetraenoate. It carries out the reaction (9Z,12Z)-octadecadienoate + O2 = (13S)-hydroperoxy-(9Z,11E)-octadecadienoate. It catalyses the reaction (12S)-hydroperoxy-(5Z,8Z,10E,14Z)-eicosatetraenoate = (8S)-hydroxy-(11S,12S)-epoxy-(5Z,9E,14Z)-eicosatrienoate. The enzyme catalyses (5Z,8Z,11Z,14Z)-eicosatetraenoate + 2 O2 = (14R,15S)-dihydroperoxy-(5Z,8Z,10E,12E)-eicosatetraenoate. The catalysed reaction is (5Z,8Z,11Z,14Z)-eicosatetraenoate + 2 O2 = (8S,15S)-dihydroperoxy-(5Z,9E,11Z,13E)-eicosatetraenoate. It carries out the reaction (14S,15R)-epoxy-(5Z,8Z,11Z)-eicosatrienoate + O2 = (8S)-hydroperoxy-(14S,15R)-epoxy-(5Z,9E,11Z)-eicosatrienoate. It catalyses the reaction (14S,15R)-epoxy-(5Z,8Z,11Z)-eicosatrienoate + O2 = (12S)-hydroperoxy-(14S,15R)-epoxy-(5Z,8Z,10E)-eicosatrienoate. The enzyme catalyses (14R,15S)-epoxy-(5Z,8Z,11Z)-eicosatrienoate + O2 = (5S)-hydroperoxy-(14R,15S)-epoxy-(6E,8Z,11Z)-eicosatrienoate. The catalysed reaction is (14R,15S)-epoxy-(5Z,8Z,11Z)-eicosatrienoate + O2 = (12S)-hydroperoxy-(14R,15S)-epoxy-(5Z,8Z,10E)-eicosatrienoate. It carries out the reaction (15R)-hydroperoxy-(5Z,8Z,11Z,13E)-eicosatetraenoate = 15-oxo-(5Z,8Z,11Z,13E)-eicosatetraenoate + H2O. It catalyses the reaction (15S)-hydroperoxy-(5Z,8Z,11Z,13E)-eicosatetraenoate = (14S,15S)-epoxy-(5Z,8Z,10E,12E)-eicosatetraenoate + H2O. The enzyme catalyses (4Z,7Z,10Z,13Z,16Z)-docosapentaenoate + O2 = 14-hydroperoxy-(4Z,7Z,10Z,12E,16Z)-docosapentaenoate. The catalysed reaction is (7Z,10Z,13Z,16Z,19Z)-docosapentaenoate + O2 = 14-hydroperoxy-(7Z,10Z,12E,16Z,19Z)-docosapentaenoate. It carries out the reaction (4Z,7Z,10Z,13Z,16Z,19Z)-docosahexaenoate + O2 = (14S)-hydroperoxy-(4Z,7Z,10Z,12E,16Z,19Z)-docosahexaenoate. It catalyses the reaction (4Z,7Z,10Z,13Z,16Z,19Z)-docosahexaenoate + O2 = (17S)-hydroperoxy-(4Z,7Z,10Z,13Z,15E,19Z)-docosahexaenoate. The enzyme catalyses (7S)-hydroperoxy-(4Z,8E,10Z,13Z,16Z,19Z)-docosahexaenoate + O2 = (7S,14S)-dihydroperoxy-(4Z,8E,10Z,12E,16Z,19Z)-docosahexaenoate. The catalysed reaction is (7S)-hydroperoxy-(4Z,8E,10Z,13Z,16Z,19Z)-docosahexaenoate + O2 = (7S,17S)-dihydroperoxy-(4Z,8E,10Z,13Z,15E,19Z)-docosahexaenoate. It carries out the reaction (4Z,7Z,10Z,13Z,16Z,19Z)-docosahexaenoate + O2 = (11S)-hydroperoxy-(4Z,7Z,9E,13Z,16Z,19Z)-docosahexaenoate. It catalyses the reaction N-(5Z,8Z,11Z,14Z)-eicosatetraenoyl-taurine + O2 = N-(12S)-hydroperoxy-(5Z,8Z,10E,14Z)-eicosatetraenoyl-taurine. The enzyme catalyses N-(5Z,8Z,11Z,14Z)-eicosatetraenoyl-gamma-aminobutanoate + O2 = N-(12S)-hydroperoxy-(5Z,8Z,10E,14Z)-eicosatetraenoyl-gamma-aminobutanoate. The catalysed reaction is N-(5Z,8Z,11Z,14Z)-eicosatetraenoyl-glycine + O2 = N-(12S)-hydroperoxy-(5Z,8Z,10E,14Z)-eicosatetraenoyl-glycine. It carries out the reaction N-(5Z,8Z,11Z,14Z)-eicosatetraenoyl-L-alanine + O2 = N-(12S)-hydroperoxy-(5Z,8Z,10E,14Z)-eicosatetraenoyl-alanine. It catalyses the reaction N-(5Z,8Z,11Z,14Z)-eicosatetraenoyl-taurine + O2 = N-(15S)-hydroperoxy-(5Z,8Z,11Z,13E)-eicosatetraenoyl-taurine. The enzyme catalyses N-(5Z,8Z,11Z,14Z)-eicosatetraenoyl-gamma-aminobutanoate + O2 = N-(15S)-hydroperoxy-(5Z,8Z,11Z,13E)-eicosatetraenoyl-gamma-aminobutanoate. The catalysed reaction is N-(5Z,8Z,11Z,14Z)-eicosatetraenoyl-glycine + O2 = N-(15S)-hydroperoxy-(5Z,8Z,11Z,13E)-eicosatetraenoyl-glycine. It carries out the reaction N-(5Z,8Z,11Z,14Z)-eicosatetraenoyl-L-alanine + O2 = N-(15S)-hydroperoxy-(5Z,8Z,11Z,13E)-eicosatetraenoyl-alanine. Its pathway is lipid metabolism; hydroperoxy eicosatetraenoic acid biosynthesis. Non-heme iron-containing dioxygenase that catalyzes the stereo-specific peroxidation of free and esterified polyunsaturated fatty acids generating a spectrum of bioactive lipid mediators. It inserts peroxyl groups at C12 or C15 of arachidonate ((5Z,8Z,11Z,14Z)-eicosatetraenoate) producing both 12-hydroperoxyeicosatetraenoate/12-HPETE and 15-hydroperoxyeicosatetraenoate/15-HPETE. It may then act on 12-HPETE to produce hepoxilins, which may show pro-inflammatory properties. Can also peroxidize linoleate ((9Z,12Z)-octadecadienoate) to 13-hydroperoxyoctadecadienoate. May participate in the sequential oxidations of DHA ((4Z,7Z,10Z,13Z,16Z,19Z)-docosahexaenoate) to generate specialized pro-resolving mediators (SPMs)like resolvin D5 ((7S,17S)-diHPDHA) and (7S,14S)-diHPDHA, that actively down-regulate the immune response and have anti-aggregation properties with platelets. Can convert epoxy fatty acids to hydroperoxy-epoxides derivatives followed by an intramolecular nucleophilic substitution leading to the formation of monocyclic endoperoxides. Plays an important role during the maintenance of self-tolerance by peroxidizing membrane-bound phosphatidylethanolamine which can then signal the sorting process for clearance of apoptotic cells during inflammation and prevent an autoimmune response. In addition to its role in the immune and inflammatory responses, this enzyme may play a role in epithelial wound healing in the cornea through production of lipoxin A4 (LXA(4)) and docosahexaenoic acid-derived neuroprotectin D1 (NPD1; 10R,17S-HDHA), both lipid autacoids exhibit anti-inflammatory and neuroprotective properties. Furthermore, it may regulate actin polymerization which is crucial for several biological processes such as the phagocytosis of apoptotic cells. It is also implicated in the generation of endogenous ligands for peroxisome proliferator activated receptor (PPAR-gamma), hence modulating macrophage development and function. It may also exert a negative effect on skeletal development by regulating bone mass through this pathway. As well as participates in ER stress and downstream inflammation in adipocytes, pancreatic islets, and liver. Finally, it is also involved in the cellular response to IL13/interleukin-13. The polypeptide is Polyunsaturated fatty acid lipoxygenase ALOX15 (Rattus norvegicus (Rat)).